The sequence spans 115 residues: NADH-ubiquinone oxidoreductase chain 3 (115 aa).

3 helical membrane-spanning segments follow: residues 4 to 24 (ALTL…AFWL), 55 to 75 (FFLV…LLPL), and 84 to 104 (LTTM…SLAY).

The protein belongs to the complex I subunit 3 family. As to quaternary structure, core subunit of respiratory chain NADH dehydrogenase (Complex I) which is composed of 45 different subunits. Interacts with TMEM186. Interacts with TMEM242.

It is found in the mitochondrion inner membrane. The enzyme catalyses a ubiquinone + NADH + 5 H(+)(in) = a ubiquinol + NAD(+) + 4 H(+)(out). Core subunit of the mitochondrial membrane respiratory chain NADH dehydrogenase (Complex I) which catalyzes electron transfer from NADH through the respiratory chain, using ubiquinone as an electron acceptor. Essential for the catalytic activity of complex I. The protein is NADH-ubiquinone oxidoreductase chain 3 of Phoca vitulina (Harbor seal).